The sequence spans 194 residues: Peptidyl-tRNA hydrolase (194 aa).

Tyr16 provides a ligand contact to tRNA. His21 acts as the Proton acceptor in catalysis. The tRNA site is built by Phe67, Asn69, and Asn115.

Belongs to the PTH family. Monomer.

It localises to the cytoplasm. It catalyses the reaction an N-acyl-L-alpha-aminoacyl-tRNA + H2O = an N-acyl-L-amino acid + a tRNA + H(+). In terms of biological role, hydrolyzes ribosome-free peptidyl-tRNAs (with 1 or more amino acids incorporated), which drop off the ribosome during protein synthesis, or as a result of ribosome stalling. Functionally, catalyzes the release of premature peptidyl moieties from peptidyl-tRNA molecules trapped in stalled 50S ribosomal subunits, and thus maintains levels of free tRNAs and 50S ribosomes. The chain is Peptidyl-tRNA hydrolase from Shigella boydii serotype 4 (strain Sb227).